The primary structure comprises 310 residues: NAD-dependent protein deacylase sirtuin-5, mitochondrial (310 aa).

A mitochondrion-targeting transit peptide spans 1 to 36 (MQPLQIAPCRLLYGLYRGLKSPASTGTRICPAMARP). The region spanning 37-307 (SSNMADFRKL…PEALAPHETG (271 aa)) is the Deacetylase sirtuin-type domain. 58 to 77 (GAGVSAESGVPTFRGAGGYW) is a binding site for NAD(+). 2 residues coordinate substrate: Tyr102 and Arg105. 140-143 (QNID) provides a ligand contact to NAD(+). His158 (proton acceptor) is an active-site residue. Zn(2+)-binding residues include Cys166, Cys169, Cys207, and Cys212. NAD(+) contacts are provided by residues 249 to 251 (GTS), 275 to 277 (NME), and Cys293.

This sequence belongs to the sirtuin family. Class III subfamily. In terms of assembly, monomer. Homodimer. Interacts with CPS1. Interacts with PCCA. The cofactor is Zn(2+).

Its subcellular location is the mitochondrion. The protein resides in the cytoplasm. It is found in the cytosol. The protein localises to the nucleus. The enzyme catalyses N(6)-malonyl-L-lysyl-[protein] + NAD(+) + H2O = 2''-O-malonyl-ADP-D-ribose + nicotinamide + L-lysyl-[protein]. It catalyses the reaction N(6)-succinyl-L-lysyl-[protein] + NAD(+) + H2O = 2''-O-succinyl-ADP-D-ribose + nicotinamide + L-lysyl-[protein]. It carries out the reaction N(6)-glutaryl-L-lysyl-[protein] + NAD(+) + H2O = 2''-O-glutaryl-ADP-D-ribose + nicotinamide + L-lysyl-[protein]. NAD-dependent lysine demalonylase, desuccinylase and deglutarylase that specifically removes malonyl, succinyl and glutaryl groups on target proteins. Activates CPS1 and contributes to the regulation of blood ammonia levels during prolonged fasting: acts by mediating desuccinylation and deglutarylation of CPS1, thereby increasing CPS1 activity in response to elevated NAD levels during fasting. Activates SOD1 by mediating its desuccinylation, leading to reduced reactive oxygen species. Activates SHMT2 by mediating its desuccinylation. Modulates ketogenesis through the desuccinylation and activation of HMGCS2. Has weak NAD-dependent protein deacetylase activity; however this activity may not be physiologically relevant in vivo. Can deacetylate cytochrome c (CYCS) and a number of other proteins in vitro such as UOX. In Canis lupus familiaris (Dog), this protein is NAD-dependent protein deacylase sirtuin-5, mitochondrial.